The sequence spans 173 residues: dCTP deaminase, dUMP-forming (173 aa).

DCTP contacts are provided by residues 93–98 (RSSTGR), aspartate 111, 119–121 (TLE), glutamine 138, and tyrosine 151. Glutamate 121 acts as the Proton donor/acceptor in catalysis.

It belongs to the dCTP deaminase family. As to quaternary structure, homotrimer.

It carries out the reaction dCTP + 2 H2O = dUMP + NH4(+) + diphosphate. It participates in pyrimidine metabolism; dUMP biosynthesis; dUMP from dCTP: step 1/1. Functionally, bifunctional enzyme that catalyzes both the deamination of dCTP to dUTP and the hydrolysis of dUTP to dUMP without releasing the toxic dUTP intermediate. The chain is dCTP deaminase, dUMP-forming from Clostridium botulinum (strain Alaska E43 / Type E3).